A 305-amino-acid chain; its full sequence is tRNA dimethylallyltransferase (305 aa).

An ATP-binding site is contributed by 8-15 (GPTASGKT). 10 to 15 (TASGKT) is a binding site for substrate. Positions 33-36 (DSQQ) are interaction with substrate tRNA.

It belongs to the IPP transferase family. As to quaternary structure, monomer. Mg(2+) serves as cofactor.

It catalyses the reaction adenosine(37) in tRNA + dimethylallyl diphosphate = N(6)-dimethylallyladenosine(37) in tRNA + diphosphate. In terms of biological role, catalyzes the transfer of a dimethylallyl group onto the adenine at position 37 in tRNAs that read codons beginning with uridine, leading to the formation of N6-(dimethylallyl)adenosine (i(6)A). The polypeptide is tRNA dimethylallyltransferase (Anaeromyxobacter sp. (strain K)).